The sequence spans 191 residues: UPF0312 protein Sden_2128 (191 aa).

An N-terminal signal peptide occupies residues 1-22; the sequence is MKKHLLASLLGASLLLPTAVNA.

Belongs to the UPF0312 family. Type 1 subfamily.

It localises to the periplasm. The sequence is that of UPF0312 protein Sden_2128 from Shewanella denitrificans (strain OS217 / ATCC BAA-1090 / DSM 15013).